Consider the following 308-residue polypeptide: Ribosomal RNA small subunit methyltransferase H (308 aa).

S-adenosyl-L-methionine is bound by residues 32–34, D51, F78, D99, and Q106; that span reads GGH.

It belongs to the methyltransferase superfamily. RsmH family.

It is found in the cytoplasm. It catalyses the reaction cytidine(1402) in 16S rRNA + S-adenosyl-L-methionine = N(4)-methylcytidine(1402) in 16S rRNA + S-adenosyl-L-homocysteine + H(+). In terms of biological role, specifically methylates the N4 position of cytidine in position 1402 (C1402) of 16S rRNA. The protein is Ribosomal RNA small subunit methyltransferase H of Campylobacter curvus (strain 525.92).